Here is a 503-residue protein sequence, read N- to C-terminus: Maturase K (503 aa).

The protein belongs to the intron maturase 2 family. MatK subfamily.

It is found in the plastid. The protein resides in the chloroplast. In terms of biological role, usually encoded in the trnK tRNA gene intron. Probably assists in splicing its own and other chloroplast group II introns. This chain is Maturase K, found in Silene latifolia (White campion).